Reading from the N-terminus, the 629-residue chain is tRNA uridine 5-carboxymethylaminomethyl modification enzyme MnmG (629 aa).

Residues 13–18 (GGGHAG), Val125, and Ser180 each bind FAD. NAD(+) is bound at residue 273–287 (GPRYCPSIEDKVMRF). Gln370 is an FAD binding site.

This sequence belongs to the MnmG family. Homodimer. Heterotetramer of two MnmE and two MnmG subunits. The cofactor is FAD.

It localises to the cytoplasm. Functionally, NAD-binding protein involved in the addition of a carboxymethylaminomethyl (cmnm) group at the wobble position (U34) of certain tRNAs, forming tRNA-cmnm(5)s(2)U34. The polypeptide is tRNA uridine 5-carboxymethylaminomethyl modification enzyme MnmG (Enterobacter sp. (strain 638)).